Consider the following 234-residue polypeptide: Adenosine 5'-phosphosulfate reductase (234 aa).

Positions 120, 121, 203, and 206 each coordinate [4Fe-4S] cluster. Cys-229 functions as the Nucleophile; cysteine thiosulfonate intermediate in the catalytic mechanism.

This sequence belongs to the PAPS reductase family. CysH subfamily. [4Fe-4S] cluster is required as a cofactor.

Its subcellular location is the cytoplasm. It catalyses the reaction [thioredoxin]-disulfide + sulfite + AMP + 2 H(+) = adenosine 5'-phosphosulfate + [thioredoxin]-dithiol. It functions in the pathway sulfur metabolism; hydrogen sulfide biosynthesis; sulfite from sulfate. Its function is as follows. Catalyzes the formation of sulfite from adenosine 5'-phosphosulfate (APS) using thioredoxin as an electron donor. The sequence is that of Adenosine 5'-phosphosulfate reductase from Bacillus thuringiensis subsp. konkukian (strain 97-27).